A 577-amino-acid chain; its full sequence is Moesin (577 aa).

Residues 2–295 form the FERM domain; that stretch reads PKTISVRVTT…GNHELYMRRR (294 aa). Ser74 is subject to Phosphoserine. Lys79 bears the N6-acetyllysine mark. Lys83 is subject to N6-succinyllysine. The [IL]-x-C-x-x-[DE] motif motif lies at 115–120; it reads IYCPPE. Tyr116 carries the post-translational modification Phosphotyrosine. Cys117 is subject to S-nitrosocysteine. Residues Lys139 and Lys165 each carry the N6-acetyllysine modification. 3 disordered regions span residues 322-342, 358-419, and 468-518; these read LLENEKKKRELAEKEKEKIER, TKKA…QLAS, and STPH…NERV. A compositionally biased stretch (basic and acidic residues) spans 358 to 401; that stretch reads TKKAQQELEEQTRRALELEQERKRAQSEAEKLAKERQEAEEAKE. At Ser407 the chain carries Phosphoserine. Basic and acidic residues predominate over residues 492 to 518; the sequence is AELRADAMAKDRSEEERTTEAEKNERV. Position 527 is a phosphoserine (Ser527). The residue at position 558 (Thr558) is a Phosphothreonine; by ROCK2 and STK10.

In resting T-cells, part of a PAG1-NHERF1-MSN complex which is disrupted upon TCR activation. Interacts with NHERF1. Interacts with PPP1R16B. Interacts with SELPLG and SYK; these interactions mediate the activation of SYK by SELPLG. Interacts with PDPN (via cytoplasmic domain); this interaction activates RHOA and promotes epithelial-mesenchymal transition. Interacts with SPN/CD43 cytoplasmic tail. Interacts with CD44. Interacts with ICAM2. Interacts with ICAM3 (via C-terminus). Interacts with PDZD8. Interacts with F-actin. Interacts with CD46. Interacts with PTPN6. Post-translationally, phosphorylation on Thr-558 by STK10 negatively regulates lymphocyte migration and polarization. Phosphorylation on Thr-558 is crucial for the formation of microvilli-like structures. Phosphorylation by ROCK2 suppresses the head-to-tail association of the N-terminal and C-terminal halves resulting in an opened conformation which is capable of actin and membrane-binding. S-nitrosylation of Cys-117 is induced by interferon-gamma and oxidatively-modified low-densitity lipoprotein (LDL(ox)) implicating the iNOS-S100A8/9 transnitrosylase complex.

Its subcellular location is the cell membrane. The protein localises to the cytoplasm. It is found in the cytoskeleton. The protein resides in the apical cell membrane. It localises to the cell projection. Its subcellular location is the microvillus membrane. The protein localises to the microvillus. Functionally, ezrin-radixin-moesin (ERM) family protein that connects the actin cytoskeleton to the plasma membrane and thereby regulates the structure and function of specific domains of the cell cortex. Tethers actin filaments by oscillating between a resting and an activated state providing transient interactions between moesin and the actin cytoskeleton. Once phosphorylated on its C-terminal threonine, moesin is activated leading to interaction with F-actin and cytoskeletal rearrangement. These rearrangements regulate many cellular processes, including cell shape determination, membrane transport, and signal transduction. The role of moesin is particularly important in immunity acting on both T and B-cells homeostasis and self-tolerance, regulating lymphocyte egress from lymphoid organs. Modulates phagolysosomal biogenesis in macrophages. Also participates in immunologic synapse formation. This is Moesin from Mus musculus (Mouse).